Consider the following 798-residue polypeptide: uncharacterized protein (798 aa).

Residues 1-13 (MSSSQSPSTPSAS) are compositionally biased toward low complexity. A chloroplast-targeting transit peptide spans 1–58 (MSSSQSPSTPSASLVDSSDSKHPDDLPQIYKRRSVWTSSEDAVSSSNSPEQTTPFTVR). Disordered stretches follow at residues 1 to 99 (MSSS…WQDA), 135 to 158 (AEKK…SMCT), and 417 to 473 (TGLI…AEPS). Residues 35–55 (VWTSSEDAVSSSNSPEQTTPF) are compositionally biased toward polar residues. Residues 57–79 (VREDTNADIARELDLPDDPEPHL) show a composition bias toward basic and acidic residues. A compositionally biased stretch (basic residues) spans 137-146 (KKKRKKKKKA). The segment covering 462–473 (AAPAEAQGAEPS) has biased composition (low complexity). Residues 578–658 (RSNMEVAGKL…MLSEARGLRD (81 aa)) are a coiled coil. The interval 749–798 (DDLKAPAPEPAPLSPGGHRSVESLADEAGITDQAGSLLPAKDNRPSEDLD) is disordered. A Phosphoserine modification is found at Ser-762. The span at 789–798 (KDNRPSEDLD) shows a compositional bias: basic and acidic residues.

The protein localises to the plastid. Its subcellular location is the chloroplast. This is an uncharacterized protein from Arabidopsis thaliana (Mouse-ear cress).